The sequence spans 205 residues: Guanylate kinase (205 aa).

A Guanylate kinase-like domain is found at 19-197 (PKLFTISAPA…AYRVLKSIFI (179 aa)). 26-33 (APAGVGKT) contacts ATP.

The protein belongs to the guanylate kinase family.

The protein localises to the cytoplasm. It catalyses the reaction GMP + ATP = GDP + ADP. Essential for recycling GMP and indirectly, cGMP. This Chlamydia pneumoniae (Chlamydophila pneumoniae) protein is Guanylate kinase (gmk).